We begin with the raw amino-acid sequence, 429 residues long: Phosphoglucosamine mutase (429 aa).

Ser-96 acts as the Phosphoserine intermediate in catalysis. Mg(2+) contacts are provided by Ser-96, Asp-230, Asp-232, and Asp-234. Ser-96 is subject to Phosphoserine.

It belongs to the phosphohexose mutase family. Requires Mg(2+) as cofactor. In terms of processing, activated by phosphorylation.

The catalysed reaction is alpha-D-glucosamine 1-phosphate = D-glucosamine 6-phosphate. Its function is as follows. Catalyzes the conversion of glucosamine-6-phosphate to glucosamine-1-phosphate. In Thermotoga petrophila (strain ATCC BAA-488 / DSM 13995 / JCM 10881 / RKU-1), this protein is Phosphoglucosamine mutase.